The sequence spans 250 residues: Probable aquaporin TIP-type (250 aa).

The next 2 membrane-spanning stretches (helical) occupy residues 22 to 42 and 56 to 76; these read AGLAEFISTFIFVFAGSGSGI and AGLISASIAHAFALFVAVSVG. An NPA 1 motif is present at residues 85 to 87; it reads NPA. 3 helical membrane-spanning segments follow: residues 104 to 124, 138 to 158, and 170 to 190; these read IVYIIAQLLGSIVASALLVFV, VGVGPALVLEIVMTFGLVYTV, and IGIIAPIAIGFIVGANILVGG. An NPA 2 motif is present at residues 198-200; that stretch reads NPA. A helical transmembrane segment spans residues 218–238; that stretch reads YWAGPLIGGGIAGLVYEVLFI.

It belongs to the MIP/aquaporin (TC 1.A.8) family. TIP (TC 1.A.8.10) subfamily.

The protein localises to the membrane. Aquaporins facilitate the transport of water and small neutral solutes across cell membranes. May have a role in buffering osmotic fluctations in the highly compartmented vacuole of arbuscule cells. The sequence is that of Probable aquaporin TIP-type (AQP1) from Medicago truncatula (Barrel medic).